Reading from the N-terminus, the 189-residue chain is Penicillin-binding protein activator LpoB (189 aa).

A signal peptide spans 1–16 (MRRILFVALSVMFLAG). C17 carries N-palmitoyl cysteine lipidation. Residue C17 is the site of S-diacylglycerol cysteine attachment. The disordered stretch occupies residues 18-52 (PSLPPEQPEPPTPVVPVTPSEKPTPPSEKVPEPPK). Positions 19–45 (SLPPEQPEPPTPVVPVTPSEKPTPPSE) are enriched in pro residues.

The protein belongs to the LpoB family. In terms of assembly, interacts with PBP1b.

Its subcellular location is the cell outer membrane. Functionally, regulator of peptidoglycan synthesis that is essential for the function of penicillin-binding protein 1B (PBP1b). The protein is Penicillin-binding protein activator LpoB of Photorhabdus laumondii subsp. laumondii (strain DSM 15139 / CIP 105565 / TT01) (Photorhabdus luminescens subsp. laumondii).